The primary structure comprises 194 residues: Peptidyl-tRNA hydrolase (194 aa).

TRNA is bound at residue Tyr17. Residue His22 is the Proton acceptor of the active site. TRNA is bound by residues Tyr68, Asn70, and Asn116.

This sequence belongs to the PTH family. In terms of assembly, monomer.

Its subcellular location is the cytoplasm. The catalysed reaction is an N-acyl-L-alpha-aminoacyl-tRNA + H2O = an N-acyl-L-amino acid + a tRNA + H(+). Functionally, hydrolyzes ribosome-free peptidyl-tRNAs (with 1 or more amino acids incorporated), which drop off the ribosome during protein synthesis, or as a result of ribosome stalling. Its function is as follows. Catalyzes the release of premature peptidyl moieties from peptidyl-tRNA molecules trapped in stalled 50S ribosomal subunits, and thus maintains levels of free tRNAs and 50S ribosomes. In Pseudomonas savastanoi pv. phaseolicola (strain 1448A / Race 6) (Pseudomonas syringae pv. phaseolicola (strain 1448A / Race 6)), this protein is Peptidyl-tRNA hydrolase.